A 41-amino-acid polypeptide reads, in one-letter code: Photosystem I reaction center subunit IX (41 aa).

The helical transmembrane segment at 7-27 (YLSVAPVLSTLWFGALAGLLI) threads the bilayer.

This sequence belongs to the PsaJ family.

It localises to the plastid. The protein localises to the chloroplast thylakoid membrane. Functionally, may help in the organization of the PsaE and PsaF subunits. This chain is Photosystem I reaction center subunit IX, found in Jasminum nudiflorum (Winter jasmine).